The following is a 386-amino-acid chain: Probable mannan endo-1,4-beta-mannosidase A (386 aa).

A signal peptide spans 1-21; the sequence is MKLNPSLLTAAGLVSAQLASA. 2 residues coordinate substrate: tryptophan 95 and asparagine 207. Glutamate 208 (proton donor) is an active-site residue. Position 283 (tyrosine 283) interacts with substrate. Residue glutamate 316 is the Nucleophile of the active site. Residue asparagine 336 is glycosylated (N-linked (GlcNAc...) asparagine). Tryptophan 346 serves as a coordination point for substrate.

Belongs to the glycosyl hydrolase 5 (cellulase A) family.

It is found in the secreted. The catalysed reaction is Random hydrolysis of (1-&gt;4)-beta-D-mannosidic linkages in mannans, galactomannans and glucomannans.. Its function is as follows. Endo-1,4-mannanase, a crucial enzyme for depolymerization of seed galactomannans and wood galactoglucomannans. The protein is Probable mannan endo-1,4-beta-mannosidase A (manA) of Aspergillus oryzae (strain ATCC 42149 / RIB 40) (Yellow koji mold).